A 90-amino-acid chain; its full sequence is Small ribosomal subunit protein uS15c (90 aa).

The protein belongs to the universal ribosomal protein uS15 family. In terms of assembly, part of the 30S ribosomal subunit.

It is found in the plastid. The protein resides in the chloroplast. The protein is Small ribosomal subunit protein uS15c (rps15) of Lotus japonicus (Lotus corniculatus var. japonicus).